The following is a 224-amino-acid chain: Abasic site processing protein YoqW (224 aa).

Cys2 acts as the Nucleophile in catalysis. At Cys2 the chain carries Thiazolidine linkage to a ring-opened DNA abasic site. Glu106 is a catalytic residue.

Belongs to the SOS response-associated peptidase family.

Its activity is regulated as follows. Formation and reversal of DNA-protein cross-link depends on DNA context. Catalyzes formation of the thiazolidine linkage in presence of abasic sites in single-stranded DNA. Mediates the reversal of the thiazolidine cross-link in presence of double stranded DNA. Its function is as follows. Sensor of abasic sites in single-stranded DNA (ssDNA) required to preserve genome integrity by promoting error-free repair of abasic sites. Recognizes and binds abasic sites in ssDNA at replication forks and chemically modifies the lesion by forming a covalent cross-link with DNA: forms a stable thiazolidine linkage between a ring-opened abasic site and the alpha-amino and sulfhydryl substituents of its N-terminal catalytic cysteine residue. The DNA-protein cross-link is then reversed: able to catalyze the reversal of the thiazolidine cross-link and cycle between a cross-link and a non-cross-linked state depending on DNA context: mediates self-reversal of the thiazolidine cross-link in double stranded DNA. May act as a protease: mediates autocatalytic processing of its N-terminal methionine in order to expose the catalytic cysteine. The chain is Abasic site processing protein YoqW (yoqW) from Bacillus subtilis (strain 168).